A 171-amino-acid polypeptide reads, in one-letter code: uncharacterized protein (171 aa).

The protein belongs to the mimivirus R24/R907 family.

This is an uncharacterized protein from Acanthamoeba polyphaga (Amoeba).